The following is a 355-amino-acid chain: UDP-N-acetylglucosamine--N-acetylmuramyl-(pentapeptide) pyrophosphoryl-undecaprenol N-acetylglucosamine transferase (355 aa).

Residues 15–17, N127, R163, S191, I244, 263–268, and Q288 contribute to the UDP-N-acetyl-alpha-D-glucosamine site; these read TGG and ALTVSE.

Belongs to the glycosyltransferase 28 family. MurG subfamily.

It is found in the cell inner membrane. The enzyme catalyses di-trans,octa-cis-undecaprenyl diphospho-N-acetyl-alpha-D-muramoyl-L-alanyl-D-glutamyl-meso-2,6-diaminopimeloyl-D-alanyl-D-alanine + UDP-N-acetyl-alpha-D-glucosamine = di-trans,octa-cis-undecaprenyl diphospho-[N-acetyl-alpha-D-glucosaminyl-(1-&gt;4)]-N-acetyl-alpha-D-muramoyl-L-alanyl-D-glutamyl-meso-2,6-diaminopimeloyl-D-alanyl-D-alanine + UDP + H(+). It functions in the pathway cell wall biogenesis; peptidoglycan biosynthesis. In terms of biological role, cell wall formation. Catalyzes the transfer of a GlcNAc subunit on undecaprenyl-pyrophosphoryl-MurNAc-pentapeptide (lipid intermediate I) to form undecaprenyl-pyrophosphoryl-MurNAc-(pentapeptide)GlcNAc (lipid intermediate II). This chain is UDP-N-acetylglucosamine--N-acetylmuramyl-(pentapeptide) pyrophosphoryl-undecaprenol N-acetylglucosamine transferase, found in Salmonella dublin (strain CT_02021853).